A 231-amino-acid polypeptide reads, in one-letter code: Probable GTP-binding protein EngB (231 aa).

The region spanning 51–231 is the EngB-type G domain; sequence DLSEIAFAGR…RAQLAALASP (181 aa). GTP-binding positions include 59–66, 86–90, 109–112, 176–179, and 210–212; these read GRSNVGKS, GRTQE, DLPG, TKAD, and TSS. S66 and T88 together coordinate Mg(2+).

The protein belongs to the TRAFAC class TrmE-Era-EngA-EngB-Septin-like GTPase superfamily. EngB GTPase family. It depends on Mg(2+) as a cofactor.

Necessary for normal cell division and for the maintenance of normal septation. This chain is Probable GTP-binding protein EngB, found in Rhodospirillum rubrum (strain ATCC 11170 / ATH 1.1.1 / DSM 467 / LMG 4362 / NCIMB 8255 / S1).